The following is a 69-amino-acid chain: MKKQKRDLHQRAYVKGYRAGMAGRSKALSERCHTQARQDWLTGWREGREDMWNGLTPVDGTYKAASFSQ.

The protein belongs to the ribosome modulation factor family.

Its subcellular location is the cytoplasm. During stationary phase, converts 70S ribosomes to an inactive dimeric form (100S ribosomes). The protein is Ribosome modulation factor of Marinomonas mediterranea (strain ATCC 700492 / JCM 21426 / NBRC 103028 / MMB-1).